The sequence spans 370 residues: Putative L-lysine 2,3-aminomutase aq_454 (370 aa).

In terms of domain architecture, Radical SAM core spans 107 to 322 (HRYPDRVLLN…RGRLSGFGIP (216 aa)). [4Fe-4S] cluster-binding residues include Cys-121, Cys-125, and Cys-128. Residue Lys-334 is modified to N6-(pyridoxal phosphate)lysine.

It belongs to the radical SAM superfamily. KamA family. Requires [4Fe-4S] cluster as cofactor. Pyridoxal 5'-phosphate serves as cofactor.

In Aquifex aeolicus (strain VF5), this protein is Putative L-lysine 2,3-aminomutase aq_454.